Reading from the N-terminus, the 438-residue chain is Glutamyl-tRNA reductase (438 aa).

Substrate-binding positions include 49-52 (TCNR), Ser-109, 114-116 (EGQ), and Gln-120. The active-site Nucleophile is Cys-50. NADP(+) is bound at residue 197 to 202 (GAGKMS).

It belongs to the glutamyl-tRNA reductase family. As to quaternary structure, homodimer.

The enzyme catalyses (S)-4-amino-5-oxopentanoate + tRNA(Glu) + NADP(+) = L-glutamyl-tRNA(Glu) + NADPH + H(+). It functions in the pathway porphyrin-containing compound metabolism; protoporphyrin-IX biosynthesis; 5-aminolevulinate from L-glutamyl-tRNA(Glu): step 1/2. The protein operates within porphyrin-containing compound metabolism; chlorophyll biosynthesis. Its function is as follows. Catalyzes the NADPH-dependent reduction of glutamyl-tRNA(Glu) to glutamate 1-semialdehyde (GSA). This Synechococcus elongatus (strain ATCC 33912 / PCC 7942 / FACHB-805) (Anacystis nidulans R2) protein is Glutamyl-tRNA reductase.